The primary structure comprises 197 residues: Glycerol-3-phosphate acyltransferase (197 aa).

5 consecutive transmembrane segments (helical) span residues 1-21, 50-70, 82-102, 112-132, and 159-179; these read MDFI…GLLI, LGFA…VLAA, IVCL…YLGF, LGVF…VFAA, and GASQ…WIKH.

It belongs to the PlsY family. Probably interacts with PlsX.

The protein resides in the cell inner membrane. The catalysed reaction is an acyl phosphate + sn-glycerol 3-phosphate = a 1-acyl-sn-glycero-3-phosphate + phosphate. The protein operates within lipid metabolism; phospholipid metabolism. In terms of biological role, catalyzes the transfer of an acyl group from acyl-phosphate (acyl-PO(4)) to glycerol-3-phosphate (G3P) to form lysophosphatidic acid (LPA). This enzyme utilizes acyl-phosphate as fatty acyl donor, but not acyl-CoA or acyl-ACP. The chain is Glycerol-3-phosphate acyltransferase from Desulfotalea psychrophila (strain LSv54 / DSM 12343).